The sequence spans 215 residues: ATP-dependent dethiobiotin synthetase BioD (215 aa).

Position 13–18 (13–18 (DIGKTI)) interacts with ATP. Threonine 17 contacts Mg(2+). Lysine 38 is an active-site residue. A substrate-binding site is contributed by threonine 42. Residues aspartate 50, 115–118 (EGAG), and 175–176 (NH) each bind ATP. Mg(2+)-binding residues include aspartate 50 and glutamate 115.

This sequence belongs to the dethiobiotin synthetase family. Homodimer. The cofactor is Mg(2+).

It is found in the cytoplasm. The catalysed reaction is (7R,8S)-7,8-diammoniononanoate + CO2 + ATP = (4R,5S)-dethiobiotin + ADP + phosphate + 3 H(+). The protein operates within cofactor biosynthesis; biotin biosynthesis; biotin from 7,8-diaminononanoate: step 1/2. In terms of biological role, catalyzes a mechanistically unusual reaction, the ATP-dependent insertion of CO2 between the N7 and N8 nitrogen atoms of 7,8-diaminopelargonic acid (DAPA, also called 7,8-diammoniononanoate) to form a ureido ring. In Neisseria meningitidis serogroup A / serotype 4A (strain DSM 15465 / Z2491), this protein is ATP-dependent dethiobiotin synthetase BioD.